The chain runs to 1574 residues: MPVRAEARAAWRVVALALLLLPAMPAASPPLTPRPLQPSMPHVCAEQKLTLVGHRQPCVQAFSRIVPVWRRTGCAQQAWCIGQERRTVYYMSYRQVYATEARTVFRCCPGWSQKPGQEGCLSDVDECASANGGCEGPCCNTVGGFYCRCPPGYQLQGDGKTCQDVDECRAHNGGCQHRCVNTPGSYLCECKPGFRLHTDGRTCLAISSCTLGNGGCQHQCVQLTVTQHRCQCRPQYQLQEDGRRCVRRSPCAEGNGGCMHICQELRGLAHCGCHPGYQLAADRKTCEDVDECALGLAQCAHGCLNTQGSFKCVCHAGYELGADGRQCYRIEMEIVNSCEAGNGGCSHGCSHTSTGPLCTCPRGYELDEDQKTCIDIDDCANSPCCQQACANTPGGYECSCFAGYRLNTDGCGCEDVDECASGHGGCEHHCSNLAGSFQCFCEAGYRLDEDRRGCTSLEESVVDLDGRLPFVRPLPHIAVLRDELPRLFQDDYGAEEEAAAAELRGEHTLTEKFVCLDHSFGHDCSLTCDDCRNGGTCFPGQDGCDCPEGWTGIICNETCPPDTFGKNCSSPCTCQNGGTCDPVLGACRCPPGVSGAHCEDGCPKGFYGKHCRKKCHCANRGRCHRLYGACLCDPGLYGRFCHLACPPWAFGPGCSEDCLCEQSHTRSCNPKDGSCSCKAGFQGERCQAECESGFFGPGCRHRCTCQPGVACDPVSGECRTQCPPGYQGEDCGQECPVGTFGVNCSGSCSCVGAPCHRVTGECLCPPGKTGEDCGADCPEGRWGLGCQEICPACEHGASCNPETGTCLCLPGFVGSRCQDTCSAGWYGTGCQIRCACANDGHCDPTTGRCSCAPGWTGLSCQRACDSGHWGPDCIHPCNCSAGHGNCDAVSGLCLCEAGYEGPRCEQSCRQGYYGPSCEQKCRCEHGAACDHVSGACTCPAGWRGSFCEHACPAGFFGLDCDSACNCSAGAPCDAVTGSCICPAGRWGPRCAQSCPPLTFGLNCSQICTCFNGASCDSVTGQCHCAPGWMGPTCLQACPPGLYGKNCQHSCLCRNGGRCDPILGQCTCPEGWTGLACENECLPGHYAAGCQLNCSCLHGGICDRLTGHCLCPAGWTGDKCQSSCVSGTFGVHCEEHCACRKGASCHHVTGACFCPPGWRGPHCEQACPRGWFGEACAQRCLCPTNASCHHVTGECRCPPGFTGLSCEQACQPGTFGKDCEHLCQCPGETWACDPASGVCTCAAGYHGTGCLQRCPSGRYGPGCEHICKCLNGGTCDPATGACYCPAGFLGADCSLACPQGRFGPSCAHVCACRQGAACDPVSGACICSPGKTGVRCEHGCPQDRFGKGCELKCACRNGGLCHATNGSCSCPLGWMGPHCEHACPAGRYGAACLLECFCQNNGSCEPTTGACLCGPGFYGQACEHSCPSGFHGPGCQRVCECQQGAPCDPVSGQCLCPAGFHGQFCEKGCESGSFGDGCLQQCNCHTGVPCDPISGLCLCPPGRTGAACDLDCRRGRFGPGCALRCDCGGGADCDPISGQCHCVDSYMGPTCREVPTQISSSRPAPQHPSSRAMKH.

The N-terminal stretch at 1-27 (MPVRAEARAAWRVVALALLLLPAMPAA) is a signal peptide. Residues 40–122 (MPHVCAEQKL…QKPGQEGCLS (83 aa)) form the EMI domain. Intrachain disulfides connect Cys-44-Cys-108, Cys-74-Cys-80, Cys-107-Cys-120, Cys-127-Cys-138, Cys-134-Cys-147, Cys-149-Cys-162, Cys-168-Cys-179, Cys-175-Cys-188, Cys-190-Cys-203, Cys-209-Cys-220, Cys-216-Cys-230, Cys-232-Cys-245, Cys-251-Cys-262, Cys-258-Cys-271, Cys-273-Cys-286, Cys-292-Cys-303, Cys-299-Cys-312, Cys-314-Cys-327, Cys-338-Cys-349, Cys-345-Cys-358, Cys-360-Cys-373, Cys-379-Cys-389, Cys-385-Cys-398, Cys-400-Cys-411, Cys-419-Cys-430, Cys-426-Cys-439, Cys-441-Cys-454, Cys-524-Cys-537, Cys-531-Cys-544, Cys-546-Cys-555, Cys-568-Cys-580, Cys-574-Cys-587, Cys-589-Cys-598, Cys-611-Cys-623, Cys-617-Cys-630, Cys-632-Cys-641, Cys-654-Cys-668, Cys-660-Cys-675, Cys-677-Cys-686, Cys-699-Cys-711, Cys-705-Cys-718, Cys-722-Cys-731, Cys-744-Cys-755, Cys-750-Cys-762, Cys-764-Cys-773, Cys-786-Cys-799, Cys-793-Cys-806, Cys-808-Cys-817, Cys-830-Cys-842, Cys-836-Cys-849, Cys-851-Cys-860, Cys-873-Cys-886, Cys-879-Cys-893, Cys-895-Cys-904, Cys-917-Cys-929, Cys-923-Cys-936, Cys-938-Cys-947, Cys-960-Cys-972, Cys-966-Cys-979, Cys-981-Cys-990, Cys-1003-Cys-1015, Cys-1009-Cys-1022, Cys-1024-Cys-1033, Cys-1046-Cys-1058, Cys-1052-Cys-1065, Cys-1067-Cys-1076, Cys-1089-Cys-1101, Cys-1095-Cys-1108, Cys-1110-Cys-1119, Cys-1132-Cys-1144, Cys-1138-Cys-1151, Cys-1153-Cys-1162, Cys-1175-Cys-1187, Cys-1181-Cys-1194, Cys-1196-Cys-1205, Cys-1218-Cys-1231, Cys-1224-Cys-1238, Cys-1240-Cys-1249, Cys-1262-Cys-1274, Cys-1268-Cys-1281, Cys-1283-Cys-1292, Cys-1305-Cys-1317, Cys-1311-Cys-1324, Cys-1326-Cys-1335, Cys-1348-Cys-1360, Cys-1354-Cys-1367, Cys-1369-Cys-1378, Cys-1391-Cys-1403, Cys-1397-Cys-1410, Cys-1412-Cys-1421, Cys-1434-Cys-1446, Cys-1440-Cys-1453, Cys-1455-Cys-1464, Cys-1477-Cys-1489, Cys-1483-Cys-1496, Cys-1498-Cys-1507, Cys-1520-Cys-1532, Cys-1526-Cys-1539, and Cys-1541-Cys-1550. In terms of domain architecture, EGF-like 1; calcium-binding spans 123–163 (DVDECASANGGCEGPCCNTVGGFYCRCPPGYQLQGDGKTCQ). The EGF-like 2; calcium-binding domain occupies 164–204 (DVDECRAHNGGCQHRCVNTPGSYLCECKPGFRLHTDGRTCL). EGF-like domains lie at 205–246 (AISS…RRCV) and 247–287 (RRSP…KTCE). Positions 288–328 (DVDECALGLAQCAHGCLNTQGSFKCVCHAGYELGADGRQCY) constitute an EGF-like 5; calcium-binding domain. EGF-like domains lie at 334–374 (IVNS…KTCI) and 375–412 (DIDDCANSPCCQQACANTPGGYECSCFAGYRLNTDGCG). Residues 415–455 (DVDECASGHGGCEHHCSNLAGSFQCFCEAGYRLDEDRRGCT) form the EGF-like 8; calcium-binding domain. EGF-like domains follow at residues 520–556 (FGHDCSLTCDDCRNGGTCFPGQDGCDCPEGWTGIICN), 564–599 (FGKNCSSPCTCQNGGTCDPVLGACRCPPGVSGAHCE), 607–642 (YGKHCRKKCHCANRGRCHRLYGACLCDPGLYGRFCH), 650–687 (FGPGCSEDCLCEQSHTRSCNPKDGSCSCKAGFQGERCQ), 695–732 (FGPGCRHRCTCQPGVACDPVSGECRTQCPPGYQGEDCG), 740–774 (FGVNCSGSCSCVGAPCHRVTGECLCPPGKTGEDCG), 782–818 (WGLGCQEICPACEHGASCNPETGTCLCLPGFVGSRCQ), 826–861 (YGTGCQIRCACANDGHCDPTTGRCSCAPGWTGLSCQ), 869–905 (WGPDCIHPCNCSAGHGNCDAVSGLCLCEAGYEGPRCE), 913–948 (YGPSCEQKCRCEHGAACDHVSGACTCPAGWRGSFCE), 956–991 (FGLDCDSACNCSAGAPCDAVTGSCICPAGRWGPRCA), 999–1034 (FGLNCSQICTCFNGASCDSVTGQCHCAPGWMGPTCL), 1042–1077 (YGKNCQHSCLCRNGGRCDPILGQCTCPEGWTGLACE), 1085–1120 (YAAGCQLNCSCLHGGICDRLTGHCLCPAGWTGDKCQ), 1128–1163 (FGVHCEEHCACRKGASCHHVTGACFCPPGWRGPHCE), 1171–1206 (FGEACAQRCLCPTNASCHHVTGECRCPPGFTGLSCE), 1214–1250 (FGKDCEHLCQCPGETWACDPASGVCTCAAGYHGTGCL), 1258–1293 (YGPGCEHICKCLNGGTCDPATGACYCPAGFLGADCS), 1301–1336 (FGPSCAHVCACRQGAACDPVSGACICSPGKTGVRCE), 1344–1379 (FGKGCELKCACRNGGLCHATNGSCSCPLGWMGPHCE), 1387–1422 (YGAACLLECFCQNNGSCEPTTGACLCGPGFYGQACE), 1430–1465 (HGPGCQRVCECQQGAPCDPVSGQCLCPAGFHGQFCE), 1473–1508 (FGDGCLQQCNCHTGVPCDPISGLCLCPPGRTGAACD), and 1516–1551 (FGPGCALRCDCGGGADCDPISGQCHCVDSYMGPTCR). Positions 1555–1568 (TQISSSRPAPQHPS) are enriched in polar residues. A disordered region spans residues 1555 to 1574 (TQISSSRPAPQHPSSRAMKH).

As to expression, expressed in lung.

Its subcellular location is the secreted. In Rattus norvegicus (Rat), this protein is Multiple epidermal growth factor-like domains protein 6 (Megf6).